Here is a 95-residue protein sequence, read N- to C-terminus: Aspartyl/glutamyl-tRNA(Asn/Gln) amidotransferase subunit C (95 aa).

This sequence belongs to the GatC family. Heterotrimer of A, B and C subunits.

It catalyses the reaction L-glutamyl-tRNA(Gln) + L-glutamine + ATP + H2O = L-glutaminyl-tRNA(Gln) + L-glutamate + ADP + phosphate + H(+). It carries out the reaction L-aspartyl-tRNA(Asn) + L-glutamine + ATP + H2O = L-asparaginyl-tRNA(Asn) + L-glutamate + ADP + phosphate + 2 H(+). Allows the formation of correctly charged Asn-tRNA(Asn) or Gln-tRNA(Gln) through the transamidation of misacylated Asp-tRNA(Asn) or Glu-tRNA(Gln) in organisms which lack either or both of asparaginyl-tRNA or glutaminyl-tRNA synthetases. The reaction takes place in the presence of glutamine and ATP through an activated phospho-Asp-tRNA(Asn) or phospho-Glu-tRNA(Gln). The chain is Aspartyl/glutamyl-tRNA(Asn/Gln) amidotransferase subunit C from Syntrophotalea carbinolica (strain DSM 2380 / NBRC 103641 / GraBd1) (Pelobacter carbinolicus).